A 266-amino-acid polypeptide reads, in one-letter code: Vitamin B12-binding protein (266 aa).

A signal peptide spans 1–22; it reads MAKSLFRALVALSFLAPLWLNA. Residues 25 to 266 enclose the Fe/B12 periplasmic-binding domain; it reads RVITLSPANT…QLCNALSQVD (242 aa). Cyanocob(III)alamin contacts are provided by residues Tyr-50 and 242-246; that span reads DWFER. An intrachain disulfide couples Cys-183 to Cys-259.

It belongs to the BtuF family. As to quaternary structure, the complex is composed of two ATP-binding proteins (BtuD), two transmembrane proteins (BtuC) and a solute-binding protein (BtuF).

It is found in the periplasm. Its function is as follows. Part of the ABC transporter complex BtuCDF involved in vitamin B12 import. Binds vitamin B12 and delivers it to the periplasmic surface of BtuC. This is Vitamin B12-binding protein (btuF) from Escherichia coli (strain K12).